Reading from the N-terminus, the 158-residue chain is Small ribosomal subunit protein uS7 (158 aa).

This sequence belongs to the universal ribosomal protein uS7 family. As to quaternary structure, part of the 30S ribosomal subunit. Contacts proteins S9 and S11.

Its function is as follows. One of the primary rRNA binding proteins, it binds directly to 16S rRNA where it nucleates assembly of the head domain of the 30S subunit. Is located at the subunit interface close to the decoding center, probably blocks exit of the E-site tRNA. The protein is Small ribosomal subunit protein uS7 of Porphyromonas gingivalis (strain ATCC 33277 / DSM 20709 / CIP 103683 / JCM 12257 / NCTC 11834 / 2561).